The primary structure comprises 88 residues: Probable glutaredoxin ssr2061 (88 aa).

An intrachain disulfide couples C15 to C18.

The protein belongs to the glutaredoxin family.

Its function is as follows. Has a glutathione-disulfide oxidoreductase activity in the presence of NADPH and glutathione reductase. Reduces low molecular weight disulfides and proteins. This is Probable glutaredoxin ssr2061 from Synechocystis sp. (strain ATCC 27184 / PCC 6803 / Kazusa).